A 325-amino-acid polypeptide reads, in one-letter code: Glycerol-3-phosphate dehydrogenase [NAD(P)+] (325 aa).

NADPH-binding residues include Trp-11, Arg-30, and Lys-103. 3 residues coordinate sn-glycerol 3-phosphate: Lys-103, Gly-131, and Ser-133. Ala-135 contributes to the NADPH binding site. Lys-186, Asp-242, Ser-252, Arg-253, and Asn-254 together coordinate sn-glycerol 3-phosphate. The Proton acceptor role is filled by Lys-186. Arg-253 provides a ligand contact to NADPH. Positions 279 and 281 each coordinate NADPH.

This sequence belongs to the NAD-dependent glycerol-3-phosphate dehydrogenase family.

It localises to the cytoplasm. The catalysed reaction is sn-glycerol 3-phosphate + NAD(+) = dihydroxyacetone phosphate + NADH + H(+). It catalyses the reaction sn-glycerol 3-phosphate + NADP(+) = dihydroxyacetone phosphate + NADPH + H(+). It functions in the pathway membrane lipid metabolism; glycerophospholipid metabolism. In terms of biological role, catalyzes the reduction of the glycolytic intermediate dihydroxyacetone phosphate (DHAP) to sn-glycerol 3-phosphate (G3P), the key precursor for phospholipid synthesis. The protein is Glycerol-3-phosphate dehydrogenase [NAD(P)+] of Wolbachia pipientis subsp. Culex pipiens (strain wPip).